The chain runs to 314 residues: Dihydroorotate dehydrogenase (fumarate) (314 aa).

Residues K46, 70–74 (NSMGL), and N130 each bind substrate. An FMN-binding site is contributed by 46-47 (KS). Position 130 (N130) interacts with FMN. Catalysis depends on nucleophile residues S132 and C133. 2 residues coordinate FMN: K167 and I195. Residue 196 to 197 (NS) participates in substrate binding. FMN-binding positions include G224, 252 to 253 (GG), and 274 to 275 (GT).

It belongs to the dihydroorotate dehydrogenase family. Type 1 subfamily. In terms of assembly, homodimer. Requires FMN as cofactor.

The protein resides in the cytoplasm. The catalysed reaction is (S)-dihydroorotate + fumarate = orotate + succinate. Its pathway is pyrimidine metabolism; UMP biosynthesis via de novo pathway. In terms of biological role, catalyzes the conversion of dihydroorotate to orotate with fumarate as the electron acceptor. The protein is Dihydroorotate dehydrogenase (fumarate) (URA1) of Saccharomyces bayanus (Yeast).